The following is a 384-amino-acid chain: Probable L-tyrosine/L-aspartate decarboxylase (384 aa).

Lysine 233 carries the post-translational modification N6-(pyridoxal phosphate)lysine.

Belongs to the group II decarboxylase family. MfnA subfamily. Requires pyridoxal 5'-phosphate as cofactor.

It carries out the reaction L-tyrosine + H(+) = tyramine + CO2. It catalyses the reaction L-aspartate + H(+) = beta-alanine + CO2. It functions in the pathway cofactor biosynthesis; methanofuran biosynthesis. Its pathway is cofactor biosynthesis; coenzyme A biosynthesis. Catalyzes the decarboxylation of L-tyrosine to produce tyramine for methanofuran biosynthesis. Can also catalyze the decarboxylation of L-aspartate to produce beta-alanine for coenzyme A (CoA) biosynthesis. The chain is Probable L-tyrosine/L-aspartate decarboxylase from Methanococcus maripaludis (strain DSM 14266 / JCM 13030 / NBRC 101832 / S2 / LL).